The primary structure comprises 21 residues: Magainin-B1 (21 aa).

In terms of tissue distribution, expressed by the skin glands.

The protein resides in the secreted. Its function is as follows. Has no antimicrobial activity against tested bacteria. This Xenopus borealis (Kenyan clawed frog) protein is Magainin-B1.